A 77-amino-acid chain; its full sequence is UPF0401 protein ECP_3010 (77 aa).

This sequence belongs to the UPF0401 family.

In Escherichia coli O6:K15:H31 (strain 536 / UPEC), this protein is UPF0401 protein ECP_3010.